Consider the following 333-residue polypeptide: Anthranilate phosphoribosyltransferase (333 aa).

5-phospho-alpha-D-ribose 1-diphosphate is bound by residues glycine 81, 84–85 (GN), threonine 89, 91–94 (NIST), 109–117 (KHGNRSVSS), and alanine 121. Glycine 81 contacts anthranilate. Serine 93 is a Mg(2+) binding site. Asparagine 112 provides a ligand contact to anthranilate. Arginine 167 contacts anthranilate. Residues aspartate 225 and glutamate 226 each contribute to the Mg(2+) site.

Belongs to the anthranilate phosphoribosyltransferase family. As to quaternary structure, homodimer. Requires Mg(2+) as cofactor.

It carries out the reaction N-(5-phospho-beta-D-ribosyl)anthranilate + diphosphate = 5-phospho-alpha-D-ribose 1-diphosphate + anthranilate. It participates in amino-acid biosynthesis; L-tryptophan biosynthesis; L-tryptophan from chorismate: step 2/5. Catalyzes the transfer of the phosphoribosyl group of 5-phosphorylribose-1-pyrophosphate (PRPP) to anthranilate to yield N-(5'-phosphoribosyl)-anthranilate (PRA). This chain is Anthranilate phosphoribosyltransferase, found in Haemophilus influenzae (strain ATCC 51907 / DSM 11121 / KW20 / Rd).